The following is a 526-amino-acid chain: Cytochrome P450 monooxygenase milC (526 aa).

The helical transmembrane segment at 2 to 20 (AIHAAYIFIAATLIALYVA) threads the bilayer. A heme-binding site is contributed by C470.

This sequence belongs to the cytochrome P450 family. Heme is required as a cofactor.

The protein resides in the membrane. It carries out the reaction cordypyrone A + reduced [NADPH--hemoprotein reductase] + O2 = cordypyrone B + oxidized [NADPH--hemoprotein reductase] + H2O + H(+). It participates in secondary metabolite biosynthesis. Its function is as follows. Cytochrome P450 monooxygenase; part of the gene cluster that mediates the biosynthesis of cordypyrones A and B, 2 pyrones that show modest activities against pathogenic bacteria including methicillin-resistant Staphylococcus aureus (MRSA), Mycobacterium tuberculosis and Bacillus cereus. The HR-PKS milA catalyzes the formation of cordypyrones A via condensation of one acetate with 10 malonate units. Since milA lacks an enoyl reductase domain, the 2 beta-keto processing domains DH and KR of milA collaborate with the trans-enoyl reductase milB to catalyze the different levels of reduction. The cytochrome P450 monooxygenase milC then hydroxylates the C-22 of cordypyrones A to yield cordypyrones B. In Cordyceps militaris (strain CM01) (Caterpillar fungus), this protein is Cytochrome P450 monooxygenase milC.